The primary structure comprises 252 residues: Adenosylcobinamide-GDP ribazoletransferase (252 aa).

Transmembrane regions (helical) follow at residues 35 to 55, 58 to 78, 113 to 133, 139 to 159, 170 to 190, 192 to 212, and 231 to 251; these read AMLPLIGLIVGCIQWVVFYIL, IFPANITAIFIILVGMVLIGG, FAVLALIFDILIKYSALSFII, YAIIITPIMSRCTLVFLFLIG, LFIENVSVKEFIISFIFMIVP, VLLIGYKYSVIIIVVSFIITL, and GANNEIVEMFTMLVFVALLYI.

This sequence belongs to the CobS family. Mg(2+) serves as cofactor.

It localises to the cell membrane. The enzyme catalyses alpha-ribazole + adenosylcob(III)inamide-GDP = adenosylcob(III)alamin + GMP + H(+). The catalysed reaction is alpha-ribazole 5'-phosphate + adenosylcob(III)inamide-GDP = adenosylcob(III)alamin 5'-phosphate + GMP + H(+). The protein operates within cofactor biosynthesis; adenosylcobalamin biosynthesis; adenosylcobalamin from cob(II)yrinate a,c-diamide: step 7/7. Functionally, joins adenosylcobinamide-GDP and alpha-ribazole to generate adenosylcobalamin (Ado-cobalamin). Also synthesizes adenosylcobalamin 5'-phosphate from adenosylcobinamide-GDP and alpha-ribazole 5'-phosphate. This Clostridium tetani (strain Massachusetts / E88) protein is Adenosylcobinamide-GDP ribazoletransferase.